Consider the following 250-residue polypeptide: Cruxrhodopsin-3 (250 aa).

Residues 1–9 (MPAPEGEAI) lie on the Extracellular side of the membrane. Residues 10 to 27 (WLWLGTAGMFLGMLYFIA) traverse the membrane as a helical segment. The Cytoplasmic segment spans residues 28–41 (RGWGETDSRRQKFY). The helical transmembrane segment at 42–60 (IATILITAIAFVNYLAMAL) threads the bilayer. At 61 to 77 (GFGLTIVEIAGEQRPIY) the chain is on the extracellular side. The helical transmembrane segment at 78-94 (WARYSDWLFTTPLLLYD) threads the bilayer. The Cytoplasmic segment spans residues 95–105 (LGLLAGADRNT). The helical transmembrane segment at 106–125 (ISSLVSLDVLMIGTGLVATL) threads the bilayer. Residues 126–138 (SAGSGVLSAGAER) lie on the Extracellular side of the membrane. The chain crosses the membrane as a helical span at residues 139–158 (LVWWGISTAFLLVLLYFLFS). The Cytoplasmic portion of the chain corresponds to 159-176 (SLSGRVADLPSDTRSTFK). A helical transmembrane segment spans residues 177–195 (TLRNLVTVVWLVYPVWWLV). Residues 196-207 (GTEGIGLVGIGI) are Extracellular-facing. The helical transmembrane segment at 208–227 (ETAGFMVIDLVAKVGFGIIL) threads the bilayer. Lys-220 is subject to N6-(retinylidene)lysine. Residues 228–250 (LRSHGVLDGAAETTGAGATATAD) lie on the Cytoplasmic side of the membrane.

The protein belongs to the archaeal/bacterial/fungal opsin family. In terms of assembly, homotrimer. Binds bacterioruberin in the crevice between neighboring subunits.

The protein resides in the cell membrane. Light-driven proton pump. The protein is Cruxrhodopsin-3 (cop3) of Haloarcula vallismortis (Halobacterium vallismortis).